Consider the following 325-residue polypeptide: MPAALPYNVSRDNKWDIKKIIQDFFKRCDVPYQVIPYDTELWNACLKRAKEKGYPVEPDSPMSLYRSFKVGVVITRTSYGHIQDYEILIWVATFTAFVTYADDAFQEDIQHLHSFARTFLQNEKHEHPVLEAFAQFLRESSIRFSHFVANTVVSSALRFMMSIALEFEGQNVSVSTEAREYPGYIRILSGLSDIYALFAFPMDLPRSTYIQAFPEQIDYINGTNDLLSFYKEELDCETVNFISAAATSQQVSKLEVLRNAAEKAAYSYDVVVNVLKPYPEALAAWKSFARGFCYFHTSSPRYRLGEMFHDFEHDLVCKCASCTEI.

Mg(2+)-binding residues include Asp-102, Glu-166, Asn-224, Ser-228, and Glu-232.

The protein belongs to the trichodiene synthase family. Requires Mg(2+) as cofactor.

In terms of biological role, alpha-cuprenene synthase; part of the gene cluster that mediates the biosynthesis of alpha-cuprenene and oxidized derivatives. The alpha-cuprenene synthase COP6 is the only sesquiterpene synthase identified in C.cinereus that appears to be part of a biosynthetic gene cluster and is highly specific since it catalyzes the cyclization of (2E,6E)-farnesyl diphosphate into only one product, alpha-cuprenene. COP6 is also able to perform the cyclization of geranyl diphosphate. The cytochrome P450 monooxygenase COX2 then oxidizes the cyclohexadiene ring of alpha-cuprenene at positions 1 and 4, yielding first alpha-cuparene, followed by alpha-cuparophenol and a further yet unidentified compound resulting from one additional oxidation step. The cytochrome P450 monooxygenase COX1 then likely catalyzes the oxidation at position 9 of the pentane ring of alpha-cuprenene to give the corresponding hydroxy or ketone derivatives. The protein is Alpha-cuprenene synthase COP6 of Coprinopsis cinerea (strain Okayama-7 / 130 / ATCC MYA-4618 / FGSC 9003) (Inky cap fungus).